The primary structure comprises 152 residues: Superoxide dismutase [Cu-Zn] 1 (152 aa).

Residues His-45, His-47, and His-62 each contribute to the Cu cation site. Cysteines 56 and 145 form a disulfide. 4 residues coordinate Zn(2+): His-62, His-70, His-79, and Asp-82. Residue His-119 coordinates Cu cation.

The protein belongs to the Cu-Zn superoxide dismutase family. As to quaternary structure, homodimer. Cu cation serves as cofactor. It depends on Zn(2+) as a cofactor.

Its subcellular location is the cytoplasm. The catalysed reaction is 2 superoxide + 2 H(+) = H2O2 + O2. Its function is as follows. Destroys radicals which are normally produced within the cells and which are toxic to biological systems. The chain is Superoxide dismutase [Cu-Zn] 1 (SODCC.1) from Solanum lycopersicum (Tomato).